The primary structure comprises 434 residues: MPCRTLTYSSEADWQGIRDMLCGRENPENSVEPVVREIMDAIRSDGDAALAGYTRRFDCPDFDPSSLRVAPDAIEKAAREIPRHDLQIITEAADNIRHFHSAQKEEAWFITRPDGTVLGQMTRPVDSAGLYVPGGQGGNTPLISSLLMNAVPAQVAGVPRIAVTTPPRKDGTLNPYILAAAHVLGLDEIYCAGSAWAVAALAYGTQTIAPVDFIAGPGNIFVTTAKRMLIGTVGIDMIAGPSEILIIADSQADAAHVAADMLSQAEHDPLASAILVTPSPQLAAAVHTELEKQVTGLDRADIARASLRDWSAIVVTPDLNSAVELSNKVAPEHLELLVQDTWGLLGSIRNAGAIFMGPHSPEPVGDYFAGPNHVLPTMGTARFSSALSVQSFCKKSSIIAASQTFTQTNAAKIARLARLEGLEAHARSVESRLS.

Substrate is bound by residues serine 242, glutamine 264, and histidine 267. Residues glutamine 264 and histidine 267 each contribute to the Zn(2+) site. Residues glutamate 332 and histidine 333 each act as proton acceptor in the active site. Residues histidine 333, aspartate 366, glutamate 420, and histidine 425 each coordinate substrate. Residue aspartate 366 participates in Zn(2+) binding. Histidine 425 contacts Zn(2+).

It belongs to the histidinol dehydrogenase family. Zn(2+) serves as cofactor.

It carries out the reaction L-histidinol + 2 NAD(+) + H2O = L-histidine + 2 NADH + 3 H(+). Its pathway is amino-acid biosynthesis; L-histidine biosynthesis; L-histidine from 5-phospho-alpha-D-ribose 1-diphosphate: step 9/9. In terms of biological role, catalyzes the sequential NAD-dependent oxidations of L-histidinol to L-histidinaldehyde and then to L-histidine. In Oleidesulfovibrio alaskensis (strain ATCC BAA-1058 / DSM 17464 / G20) (Desulfovibrio alaskensis), this protein is Histidinol dehydrogenase.